A 245-amino-acid polypeptide reads, in one-letter code: Small ribosomal subunit protein uS2 (245 aa).

It belongs to the universal ribosomal protein uS2 family.

This Dehalococcoides mccartyi (strain CBDB1) protein is Small ribosomal subunit protein uS2.